We begin with the raw amino-acid sequence, 178 residues long: Large ribosomal subunit protein uL6 (178 aa).

Belongs to the universal ribosomal protein uL6 family. In terms of assembly, part of the 50S ribosomal subunit.

In terms of biological role, this protein binds to the 23S rRNA, and is important in its secondary structure. It is located near the subunit interface in the base of the L7/L12 stalk, and near the tRNA binding site of the peptidyltransferase center. In Corynebacterium jeikeium (strain K411), this protein is Large ribosomal subunit protein uL6.